The primary structure comprises 639 residues: Threonine--tRNA ligase (639 aa).

Positions 1-61 (MATVRLPDGK…DGGGELEFVT (61 aa)) constitute a TGS domain. Residues 239–536 (DHRRLGRELG…LIEHYAGAFP (298 aa)) are catalytic. Cys-333, His-384, and His-513 together coordinate Zn(2+).

It belongs to the class-II aminoacyl-tRNA synthetase family. As to quaternary structure, homodimer. Zn(2+) is required as a cofactor.

The protein resides in the cytoplasm. It catalyses the reaction tRNA(Thr) + L-threonine + ATP = L-threonyl-tRNA(Thr) + AMP + diphosphate + H(+). In terms of biological role, catalyzes the attachment of threonine to tRNA(Thr) in a two-step reaction: L-threonine is first activated by ATP to form Thr-AMP and then transferred to the acceptor end of tRNA(Thr). Also edits incorrectly charged L-seryl-tRNA(Thr). In Rubrobacter xylanophilus (strain DSM 9941 / JCM 11954 / NBRC 16129 / PRD-1), this protein is Threonine--tRNA ligase.